A 334-amino-acid chain; its full sequence is Kihadalactone A synthase LFS (334 aa).

The Fe2OG dioxygenase domain maps to Lys181–Pro286. Positions 208, 210, and 269 each coordinate Fe cation. Residue Arg277 participates in 2-oxoglutarate binding.

The protein belongs to the iron/ascorbate-dependent oxidoreductase family. It depends on Fe(2+) as a cofactor. Expressed in maturing fruits and in juice vesicles.

It carries out the reaction (1R,2R,3S,8R,10R,11R,15S,16S)-3-(acetyloxy)-15-(1-hydroxy-4-oxobutan-2-yl)-2,7,7,11,16-pentamethyl-5-oxo-6-oxatetracyclo[9.7.0.0(2,8).0(12,16)]octadec-12-en-10-yl acetate + 2-oxoglutarate + O2 = kihadalactone A + succinate + CO2 + 2 H2O. It functions in the pathway secondary metabolite biosynthesis; terpenoid biosynthesis. 2-oxoglutarate-Fe(II) type oxidoreductase involved in the biosynthesis of limonoids triterpene natural products such as limonin, a compound with insecticidal activity responsible for the bitter taste in citrus. Catalyzes the formation of kihadalactone A. The chain is Kihadalactone A synthase LFS from Citrus sinensis (Sweet orange).